The sequence spans 317 residues: Transcription factor EC (317 aa).

The segment at 1-90 (MTLDHRLFSQ…GLMNASCPSI (90 aa)) is necessary for transcriptional transactivation. Residues 110–163 (QKKDNHNLIERRRRYNINYRIKELGTLIPKSNDPDIRWNKGTILKASVDYIKWL) form the bHLH domain. A necessary for transcriptional transactivation region spans residues 242 to 317 (TSPEFYEQAV…SLSSEDGDEL (76 aa)).

Belongs to the MiT/TFE family. Homodimer. Forms heterodimers with TFE3. Forms heterodimers with MITF. Interacts with MITF. As to expression, expressed in kidney, spleen, lung, liver, testis and muscle.

It is found in the nucleus. In terms of biological role, transcriptional regulator that acts as a repressor or an activator. Acts as a transcriptional repressor on minimal promoter containing mu E3 enhancer sequence. Binds to mu E3 DNA sequence of the immunoglobulin heavy-chain gene enhancer. Acts as a transcriptional transactivator on the proximal promoter region of the tartrate-resistant acid phosphatase (TRAP) E-box containing promoter. Collaborates with MITF in target gene activation. Acts as a transcriptional repressor on minimal promoter containing mu E3 enhancer sequence. Binds to mu E3 DNA sequence of the immunoglobulin heavy-chain gene enhancer. Binds DNA in a homo- or heterodimeric form. This Rattus norvegicus (Rat) protein is Transcription factor EC (Tfec).